We begin with the raw amino-acid sequence, 132 residues long: Small ribosomal subunit protein uS8 (132 aa).

Belongs to the universal ribosomal protein uS8 family. In terms of assembly, part of the 30S ribosomal subunit. Contacts proteins S5 and S12.

One of the primary rRNA binding proteins, it binds directly to 16S rRNA central domain where it helps coordinate assembly of the platform of the 30S subunit. This chain is Small ribosomal subunit protein uS8, found in Micrococcus luteus (strain ATCC 4698 / DSM 20030 / JCM 1464 / CCM 169 / CCUG 5858 / IAM 1056 / NBRC 3333 / NCIMB 9278 / NCTC 2665 / VKM Ac-2230) (Micrococcus lysodeikticus).